The chain runs to 104 residues: uncharacterized protein (104 aa).

This is an uncharacterized protein from Mycoplasma pneumoniae (strain ATCC 29342 / M129 / Subtype 1) (Mycoplasmoides pneumoniae).